A 504-amino-acid chain; its full sequence is Procardosin-A (504 aa).

An N-terminal signal peptide occupies residues 1-24 (MGTSIKANVLALFLFYLLSPTVFS). Residues 25–68 (VSDDGLIRIGLKKRKVDRIDQLRGRRALMEGNARKDFGFRGTVR) constitute a propeptide that is removed on maturation. A Peptidase A1 domain is found at 85–501 (YFGEIGIGTP…DYGNLLVGFA (417 aa)). D103 is an active-site residue. A disulfide bond links C116 and C122. A glycan (N-linked (GlcNAc...) asparagine) is linked at N139. An RGD motif motif is present at residues 246–248 (RGD). C277 and C281 are joined by a disulfide. D286 is an active-site residue. Residues 310-414 (GVMNQQCKTV…YANELCEHLS (105 aa)) constitute a propeptide, plant-specific insert. The 106-residue stretch at 311-416 (VMNQQCKTVV…NELCEHLSTS (106 aa)) folds into the Saposin B-type domain. 4 cysteine pairs are disulfide-bonded: C316-C410, C341-C382, C347-C379, and C424-C461. An N-linked (GlcNAc...) asparagine glycan is attached at N432. Positions 455–457 (KGE) match the KGE motif motif.

It belongs to the peptidase A1 family. Heterodimer of a light chain and a heavy chain. An intermediate form (35 kDa and 30 kDa subunits) is produced first, and undergoes proteolytic processing to remove the internal plant-specific insert (PSI) and the propeptide. There is some heterogeniety at the cleavage site. Interacts (via RGD or KGE motifs) with PLD1 (via C2 domain). N-glycosylated. Glycans found at Asn-139 include approximately 6% oligomannose, 82% oligosaccharides of the plant modified type with proximal fucose but without xylose and 6% oligosaccharides of the plant modified type with proximal fucose and xylose. Glycans found at Asn-432 include 14% oligosaccharides of the plant modified type with proximal fucose but without xylose and 86% oligosaccharides of the plant modified type with proximal fucose and xylose. In terms of tissue distribution, detected only in pistils, not in seeds, roots, midribs, bracts, stamens, pollen, vascular or supporting tissues. Detected in seeds. High amounts are detected in the broad outer region of the upper portion of the stigma, towards the lower portion of the stigma it accumulates at the periphery. Within the stigma, expressed mainly in the epidermic papillae, lower levels are found in the cortical parenchyma. Present mainly in epidermal cells within the stye (at protein level). Expressed in young flower buds, and at lower levels in seeds, pollen and bracteas, but not in roots or leaves.

It localises to the microsome membrane. Its subcellular location is the protein storage vacuole. The protein resides in the secreted. The protein localises to the cell wall. It is found in the extracellular space. It localises to the extracellular matrix. Its activity is regulated as follows. Inhibited by the specific aspartic proteinase inhibitors diazoacetyl-noleucine methyl ester and pepstatin. In terms of biological role, aspartic proteinase with a high preference for bonds between hydrophobic residues. Cleaves alpha-lactalbumin but not beta-lactoglobulin. This is Procardosin-A from Cynara cardunculus (Cardoon).